A 254-amino-acid chain; its full sequence is 3-deoxy-manno-octulosonate cytidylyltransferase (254 aa).

The protein belongs to the KdsB family.

It is found in the cytoplasm. It catalyses the reaction 3-deoxy-alpha-D-manno-oct-2-ulosonate + CTP = CMP-3-deoxy-beta-D-manno-octulosonate + diphosphate. It functions in the pathway nucleotide-sugar biosynthesis; CMP-3-deoxy-D-manno-octulosonate biosynthesis; CMP-3-deoxy-D-manno-octulosonate from 3-deoxy-D-manno-octulosonate and CTP: step 1/1. The protein operates within bacterial outer membrane biogenesis; lipopolysaccharide biosynthesis. In terms of biological role, activates KDO (a required 8-carbon sugar) for incorporation into bacterial lipopolysaccharide in Gram-negative bacteria. In Bordetella petrii (strain ATCC BAA-461 / DSM 12804 / CCUG 43448), this protein is 3-deoxy-manno-octulosonate cytidylyltransferase.